The following is a 236-amino-acid chain: UPF0257 lipoprotein YnfC (236 aa).

A signal peptide spans 1–16; it reads MKYKLLPCLLAILLTG. Cys17 is lipidated: N-palmitoyl cysteine. Residue Cys17 is the site of S-diacylglycerol cysteine attachment.

This sequence belongs to the UPF0257 family.

It is found in the cell membrane. The chain is UPF0257 lipoprotein YnfC from Escherichia coli O81 (strain ED1a).